A 296-amino-acid chain; its full sequence is Phosphatidylglycerol--prolipoprotein diacylglyceryl transferase (296 aa).

Helical transmembrane passes span I10–F30, L57–Y77, V92–L112, and L119–G139. Position 140 (R140) interacts with a 1,2-diacyl-sn-glycero-3-phospho-(1'-sn-glycerol). 3 helical membrane passes run Q194–M214, Y220–V240, and L255–L275.

This sequence belongs to the Lgt family.

The protein localises to the cell inner membrane. The catalysed reaction is L-cysteinyl-[prolipoprotein] + a 1,2-diacyl-sn-glycero-3-phospho-(1'-sn-glycerol) = an S-1,2-diacyl-sn-glyceryl-L-cysteinyl-[prolipoprotein] + sn-glycerol 1-phosphate + H(+). Its pathway is protein modification; lipoprotein biosynthesis (diacylglyceryl transfer). Functionally, catalyzes the transfer of the diacylglyceryl group from phosphatidylglycerol to the sulfhydryl group of the N-terminal cysteine of a prolipoprotein, the first step in the formation of mature lipoproteins. This chain is Phosphatidylglycerol--prolipoprotein diacylglyceryl transferase, found in Xanthomonas campestris pv. campestris (strain 8004).